We begin with the raw amino-acid sequence, 477 residues long: Cysteine--tRNA ligase (477 aa).

C30 provides a ligand contact to Zn(2+). The 'HIGH' region motif lies at 32 to 42 (PTVYDYNHIGH). Residues C209, H234, and E238 each contribute to the Zn(2+) site. The short motif at 267–271 (KMSKS) is the 'KMSKS' region element. An ATP-binding site is contributed by K270.

Belongs to the class-I aminoacyl-tRNA synthetase family. Requires Zn(2+) as cofactor.

Its subcellular location is the cytoplasm. The enzyme catalyses tRNA(Cys) + L-cysteine + ATP = L-cysteinyl-tRNA(Cys) + AMP + diphosphate. This Staphylothermus marinus (strain ATCC 43588 / DSM 3639 / JCM 9404 / F1) protein is Cysteine--tRNA ligase.